Consider the following 124-residue polypeptide: Ribonuclease pancreatic (124 aa).

The segment covering 1-13 (SETAAEKFERQHM) has biased composition (basic and acidic residues). Positions 1–23 (SETAAEKFERQHMDSYSSSSSNS) are disordered. Positions 7 and 10 each coordinate substrate. His12 functions as the Proton acceptor in the catalytic mechanism. 4 disulfide bridges follow: Cys26/Cys84, Cys40/Cys95, Cys58/Cys110, and Cys65/Cys72. Residues 41-45 (KPVNT), Lys66, and Arg85 contribute to the substrate site. His119 acts as the Proton donor in catalysis.

The protein belongs to the pancreatic ribonuclease family. In terms of assembly, monomer. Interacts with and forms tight 1:1 complexes with RNH1. Dimerization of two such complexes may occur. Interaction with RNH1 inhibits this protein. Pancreas.

The protein localises to the secreted. It carries out the reaction an [RNA] containing cytidine + H2O = an [RNA]-3'-cytidine-3'-phosphate + a 5'-hydroxy-ribonucleotide-3'-[RNA].. The catalysed reaction is an [RNA] containing uridine + H2O = an [RNA]-3'-uridine-3'-phosphate + a 5'-hydroxy-ribonucleotide-3'-[RNA].. Its function is as follows. Endonuclease that catalyzes the cleavage of RNA on the 3' side of pyrimidine nucleotides. Acts on single-stranded and double-stranded RNA. The polypeptide is Ribonuclease pancreatic (RNASE1) (Camelus dromedarius (Dromedary)).